A 565-amino-acid polypeptide reads, in one-letter code: MSVIDHVRDMAAAGLHSNVRLLSSLLLTMSNNNPELFSPSQKYQLLVYHADSLFHDKEYRNAVSKYAMALQQKKALSKTSKVRPSTGNSASTPQSQCLPSEIEVKYKMAECYTMLKLDKDAIAVLDGIPSRQRTPKINMMLANLYKKAGQERPSVTSYKEVLRQCPLALDAILGLLSLSVKGAEVASMTMNVIQTVPNLDWLSVWIKAYAFVHTGDNSRAINTICSLEKKSLLRDNVDLLGSLADLYFRAGDSKNSVLKFEQAQMLDPYLIRGMDVYGYLLAREGRLEDVENLGCRLFNISDQHAEPWVVSGCHSFYSKRYSRALYLGAKAIQLNSNSVQALLLKGAALRNMGRVQEAIIHFREAIRLAPCRLDCYEGLIECYLASNSIREAMVMANNVYKTLGANAQTLTLLATVCLEDPVTQEKAKTLLDKALAQRPDYVKAVVKKAELLSREQKYEDGIALLRNALANQSDCVLHRILGDFLVAVNEYQEAMDQYSIALSLDPNDQKSLEGMQKMEKEESPTDATQEEDVDDMEGSGEEGDLEGSDSEAAQWADQEQWFGMQ.

TPR repeat units follow at residues 101–134 (EIEVKYKMAECYTMLKLDKDAIAVLDGIPSRQRT), 169–202 (LDAILGLLSLSVKGAEVASMTMNVIQTVPNLDWL), 203–236 (SVWIKAYAFVHTGDNSRAINTICSLEKKSLLRDN), 237–270 (VDLLGSLADLYFRAGDSKNSVLKFEQAQMLDPYL), 339–372 (VQALLLKGAALRNMGRVQEAIIHFREAIRLAPCR), 373–406 (LDCYEGLIECYLASNSIREAMVMANNVYKTLGAN), 407–439 (AQTLTLLATVCLEDPVTQEKAKTLLDKALAQRP), 442–474 (VKAVVKKAELLSREQKYEDGIALLRNALANQSD), 475–508 (CVLHRILGDFLVAVNEYQEAMDQYSIALSLDPND), and 509–531 (QKSLEGMQKMEKEESPTDATQEE). At K229 the chain carries N6-acetyllysine. Positions 513–523 (EGMQKMEKEES) are enriched in basic and acidic residues. A disordered region spans residues 513–565 (EGMQKMEKEESPTDATQEEDVDDMEGSGEEGDLEGSDSEAAQWADQEQWFGMQ). Positions 528-549 (TQEEDVDDMEGSGEEGDLEGSD) are enriched in acidic residues.

This sequence belongs to the APC7 family. V-shaped homodimer. The mammalian APC/C is composed at least of 14 distinct subunits ANAPC1, ANAPC2, CDC27/APC3, ANAPC4, ANAPC5, CDC16/APC6, ANAPC7, CDC23/APC8, ANAPC10, ANAPC11, CDC26/APC12, ANAPC13, ANAPC15 and ANAPC16 that assemble into a complex of at least 19 chains with a combined molecular mass of around 1.2 MDa; APC/C interacts with FZR1 and FBXO5.

The protein localises to the cytoplasm. Its subcellular location is the cytoskeleton. The protein resides in the nucleus. It is found in the spindle. It participates in protein modification; protein ubiquitination. In terms of biological role, component of the anaphase promoting complex/cyclosome (APC/C), a cell cycle-regulated E3 ubiquitin ligase that controls progression through mitosis and the G1 phase of the cell cycle. The APC/C complex acts by mediating ubiquitination and subsequent degradation of target proteins: it mainly mediates the formation of 'Lys-11'-linked polyubiquitin chains and, to a lower extent, the formation of 'Lys-48'- and 'Lys-63'-linked polyubiquitin chains. The APC/C complex catalyzes assembly of branched 'Lys-11'-/'Lys-48'-linked branched ubiquitin chains on target proteins. APC7 is not required for the assembly of the APC/C complex, but has an enzyme-substrate adapter activity mediating the processive ubiquitination of specific substrates. Involved in brain development through the specific ubiquitination and clearance of MKI67 from constitutive heterochromatin after neuronal progenitors exit mitosis. This is Anaphase-promoting complex subunit 7 (Anapc7) from Mus musculus (Mouse).